Consider the following 330-residue polypeptide: Probable deoxyhypusine synthase (330 aa).

Lys-303 acts as the Nucleophile in catalysis.

It belongs to the deoxyhypusine synthase family. Requires NAD(+) as cofactor.

It catalyses the reaction [eIF5A protein]-L-lysine + spermidine = [eIF5A protein]-deoxyhypusine + propane-1,3-diamine. The protein operates within protein modification; eIF5A hypusination. Catalyzes the NAD-dependent oxidative cleavage of spermidine and the subsequent transfer of the butylamine moiety of spermidine to the epsilon-amino group of a specific lysine residue of the eIF-5A precursor protein to form the intermediate deoxyhypusine residue. The chain is Probable deoxyhypusine synthase (dys) from Methanocaldococcus jannaschii (strain ATCC 43067 / DSM 2661 / JAL-1 / JCM 10045 / NBRC 100440) (Methanococcus jannaschii).